The following is a 206-amino-acid chain: Holliday junction branch migration complex subunit RuvA (206 aa).

Residues 1–64 (MIGKLKGTLD…EDMLRLYGFQ (64 aa)) form a domain I region. Residues 65–144 (SALEREWFRL…AYAGAASGTI (80 aa)) are domain II. The flexible linker stretch occupies residues 145–154 (GLKQELGEGV). The interval 154–206 (VAPAPITDAVSALVNLGYSRDTAANAVAAALKTAGEDADASKLIRFGLKELAR) is domain III.

Belongs to the RuvA family. Homotetramer. Forms an RuvA(8)-RuvB(12)-Holliday junction (HJ) complex. HJ DNA is sandwiched between 2 RuvA tetramers; dsDNA enters through RuvA and exits via RuvB. An RuvB hexamer assembles on each DNA strand where it exits the tetramer. Each RuvB hexamer is contacted by two RuvA subunits (via domain III) on 2 adjacent RuvB subunits; this complex drives branch migration. In the full resolvosome a probable DNA-RuvA(4)-RuvB(12)-RuvC(2) complex forms which resolves the HJ.

It localises to the cytoplasm. The RuvA-RuvB-RuvC complex processes Holliday junction (HJ) DNA during genetic recombination and DNA repair, while the RuvA-RuvB complex plays an important role in the rescue of blocked DNA replication forks via replication fork reversal (RFR). RuvA specifically binds to HJ cruciform DNA, conferring on it an open structure. The RuvB hexamer acts as an ATP-dependent pump, pulling dsDNA into and through the RuvAB complex. HJ branch migration allows RuvC to scan DNA until it finds its consensus sequence, where it cleaves and resolves the cruciform DNA. This chain is Holliday junction branch migration complex subunit RuvA, found in Mesorhizobium japonicum (strain LMG 29417 / CECT 9101 / MAFF 303099) (Mesorhizobium loti (strain MAFF 303099)).